The following is a 241-amino-acid chain: Nicotinamide riboside kinase (241 aa).

21–29 contributes to the ATP binding site; that stretch reads GCSSSGKST. The Mg(2+) site is built by S28 and D47. D47 acts as the Proton acceptor in catalysis. Substrate is bound by residues 47-50, 67-68, and D68; these read DDFY and WD. R163 is a binding site for ATP. Residue R164 coordinates substrate. Residues R167, 167 to 169, and 213 to 215 each bind ATP; these read RGG and DVQ. Substrate is bound at residue 169-170; that stretch reads GY.

It belongs to the uridine kinase family. NRK subfamily.

The enzyme catalyses beta-nicotinamide D-riboside + ATP = beta-nicotinamide D-ribonucleotide + ADP + H(+). It catalyses the reaction beta-D-ribosylnicotinate + ATP = nicotinate beta-D-ribonucleotide + ADP + H(+). It participates in cofactor biosynthesis; NAD(+) biosynthesis. Functionally, catalyzes the phosphorylation of nicotinamide riboside (NR) and nicotinic acid riboside (NaR) to form nicotinamide mononucleotide (NMN) and nicotinic acid mononucleotide (NaMN). This Eremothecium gossypii (strain ATCC 10895 / CBS 109.51 / FGSC 9923 / NRRL Y-1056) (Yeast) protein is Nicotinamide riboside kinase (NRK1).